A 294-amino-acid chain; its full sequence is 7,8-dihydropterin-6-methyl-4-(beta-D-ribofuranosyl)-aminobenzene-5'-phosphate synthase (294 aa).

Substrate contacts are provided by E116, D186, K228, and H265.

It belongs to the metallo-beta-lactamase superfamily. Mg(2+) is required as a cofactor.

It carries out the reaction 4-(beta-D-ribofuranosyl)aminobenzene 5'-phosphate + (7,8-dihydropterin-6-yl)methyl diphosphate = N-[(7,8-dihydropterin-6-yl)methyl]-4-(beta-D-ribofuranosyl)aniline 5'-phosphate + diphosphate. The protein operates within cofactor biosynthesis; 5,6,7,8-tetrahydromethanopterin biosynthesis. In terms of biological role, catalyzes the condensation of 6-hydroxymethyl-7,8-dihydropterin pyrophosphate (DHPP) with 4-(beta-D-ribofuranosyl)-aminobenzene-5'-phosphate (beta-RFA-P) to form 7,8-dihydropterin-6-methyl-4-(beta-D-ribofuranosyl)-aminobenzene-5'-phosphate, a precursor in the biosynthesis of 5,6,7,8-tetrahydromethanopterin (H4MPT). To a lesser extent, is able to condense beta-RFA-P with another arylamine, 1-(4-aminophenyl)-1-deoxy-D-ribitol (APDR), to form 7,8-dihydropterin-6-methyl-1-(4-aminophenyl)-1-deoxy-D-ribitol. Dephosphorylated beta-RFA-P is not a substrate. This Methanocaldococcus jannaschii (strain ATCC 43067 / DSM 2661 / JAL-1 / JCM 10045 / NBRC 100440) (Methanococcus jannaschii) protein is 7,8-dihydropterin-6-methyl-4-(beta-D-ribofuranosyl)-aminobenzene-5'-phosphate synthase.